The primary structure comprises 245 residues: NAD-dependent protein deacylase 1 (245 aa).

The 243-residue stretch at 1–243 (MDEKLLKTIA…DELVRHVRKA (243 aa)) folds into the Deacetylase sirtuin-type domain. NAD(+) is bound at residue 20 to 39 (GAGVSAESGIPTFRGKDGLW). Residues Y64 and R67 each contribute to the substrate site. NAD(+) is bound at residue 98–101 (QNVD). H116 acts as the Proton acceptor in catalysis. Zn(2+) is bound by residues C124, C127, C145, and C148. Residues 185–187 (GTS), 211–213 (NPD), and A229 contribute to the NAD(+) site.

This sequence belongs to the sirtuin family. Class III subfamily. Zn(2+) serves as cofactor.

It is found in the cytoplasm. It carries out the reaction N(6)-acetyl-L-lysyl-[protein] + NAD(+) + H2O = 2''-O-acetyl-ADP-D-ribose + nicotinamide + L-lysyl-[protein]. It catalyses the reaction N(6)-succinyl-L-lysyl-[protein] + NAD(+) + H2O = 2''-O-succinyl-ADP-D-ribose + nicotinamide + L-lysyl-[protein]. Its function is as follows. NAD-dependent lysine deacetylase and desuccinylase that specifically removes acetyl and succinyl groups on target proteins. Modulates the activities of several proteins which are inactive in their acylated form. Deacetylates the N-terminal lysine residue of Alba, the major archaeal chromatin protein and that, in turn, increases Alba's DNA binding affinity, thereby repressing transcription. In Archaeoglobus fulgidus (strain ATCC 49558 / DSM 4304 / JCM 9628 / NBRC 100126 / VC-16), this protein is NAD-dependent protein deacylase 1.